The following is a 209-amino-acid chain: Ribosomal RNA large subunit methyltransferase E (209 aa).

S-adenosyl-L-methionine-binding residues include Gly-63, Trp-65, Asp-83, Asp-99, and Asp-124. Lys-164 (proton acceptor) is an active-site residue.

It belongs to the class I-like SAM-binding methyltransferase superfamily. RNA methyltransferase RlmE family.

It is found in the cytoplasm. The catalysed reaction is uridine(2552) in 23S rRNA + S-adenosyl-L-methionine = 2'-O-methyluridine(2552) in 23S rRNA + S-adenosyl-L-homocysteine + H(+). Its function is as follows. Specifically methylates the uridine in position 2552 of 23S rRNA at the 2'-O position of the ribose in the fully assembled 50S ribosomal subunit. This Shewanella pealeana (strain ATCC 700345 / ANG-SQ1) protein is Ribosomal RNA large subunit methyltransferase E.